The primary structure comprises 427 residues: UBX domain-containing protein 10 (427 aa).

Residues 247–311 adopt a coiled-coil conformation; that stretch reads LERFRSEREA…VQKKKKQYRA (65 aa). Residues 323–425 form the UBX domain; sequence SEDEPARLSI…FPNGTVVVEL (103 aa).

It is found in the endoplasmic reticulum. Functionally, involved in protein degradation through the ubiquitin/proteasome pathway. In Schizosaccharomyces pombe (strain 972 / ATCC 24843) (Fission yeast), this protein is UBX domain-containing protein 10 (ucp10).